The following is a 143-amino-acid chain: Antiholin-like protein LrgA (143 aa).

The next 4 membrane-spanning stretches (helical) occupy residues 6-26 (VYSFLSQAFIFSAIMLISNII), 30-50 (LPIPMPSSVIGLVILFSLLCL), 61-81 (LGTALTGIIGFLFVPSGISVI), and 97-117 (VIVVATVILLAVTGLFAQFIL).

The protein belongs to the CidA/LrgA family. LrgA subfamily.

The protein localises to the cell membrane. In terms of biological role, inhibits the expression or activity of extracellular murein hydrolases by interacting, possibly with LrgB, with the holin-like protein CidA. The LrgAB and CidA proteins may affect the proton motive force of the membrane. May be involved in programmed cell death (PCD), possibly triggering PCD in response to antibiotics and environmental stresses. The chain is Antiholin-like protein LrgA from Bacillus anthracis (strain A0248).